Here is a 273-residue protein sequence, read N- to C-terminus: NAD kinase (273 aa).

The active-site Proton acceptor is the Asp53. Residues 53-54 (DG), Arg58, 128-129 (NE), Asp157, 168-173 (TAYNFS), and Ala192 each bind NAD(+).

This sequence belongs to the NAD kinase family. The cofactor is a divalent metal cation.

The protein resides in the cytoplasm. It catalyses the reaction NAD(+) + ATP = ADP + NADP(+) + H(+). Involved in the regulation of the intracellular balance of NAD and NADP, and is a key enzyme in the biosynthesis of NADP. Catalyzes specifically the phosphorylation on 2'-hydroxyl of the adenosine moiety of NAD to yield NADP. The polypeptide is NAD kinase (Finegoldia magna (strain ATCC 29328 / DSM 20472 / WAL 2508) (Peptostreptococcus magnus)).